The following is a 468-amino-acid chain: Tissue alpha-L-fucosidase (468 aa).

Positions 1 to 29 (MRAPGERWRPAGAALWLLLLLLLLGATES) are cleaved as a signal peptide. At threonine 172 the chain carries Phosphothreonine. 3 N-linked (GlcNAc...) asparagine glycosylation sites follow: asparagine 243, asparagine 270, and asparagine 384.

It belongs to the glycosyl hydrolase 29 family. In terms of assembly, homotetramer.

Its subcellular location is the lysosome. It carries out the reaction an alpha-L-fucoside + H2O = L-fucose + an alcohol. It catalyses the reaction a neolactoside IV(2)-alpha-Fuc-nLc4Cer(d18:1(4E)) + H2O = a neolactoside nLc4Cer(d18:1(4E)) + L-fucose. The enzyme catalyses a neolactoside IV(2)-alpha-Fuc-nLc4Cer(d18:0) + H2O = a neolactoside nLc4Cer(d18:0) + L-fucose. Alpha-L-fucosidase is responsible for hydrolyzing the alpha-1,6-linked fucose joined to the reducing-end N-acetylglucosamine of the carbohydrate moieties of glycoproteins. The protein is Tissue alpha-L-fucosidase (FUCA1) of Macaca fascicularis (Crab-eating macaque).